Here is a 453-residue protein sequence, read N- to C-terminus: Bifunctional protein GlmU (453 aa).

The pyrophosphorylase stretch occupies residues 1-225; it reads MNIVILAAGT…EWETLGVNSK (225 aa). Residues 6–9, lysine 20, glutamine 71, 76–77, 98–100, glycine 135, glutamate 150, asparagine 165, and asparagine 223 each bind UDP-N-acetyl-alpha-D-glucosamine; these read LAAG, GT, and YGD. Aspartate 100 lines the Mg(2+) pocket. Mg(2+) is bound at residue asparagine 223. The linker stretch occupies residues 226–246; it reads AQLAELERIHQRNLADALLAA. An N-acetyltransferase region spans residues 247–453; it reads GVTLADPARI…GYVRPVKKKS (207 aa). Arginine 329 and lysine 347 together coordinate UDP-N-acetyl-alpha-D-glucosamine. The active-site Proton acceptor is the histidine 359. Tyrosine 362 and asparagine 373 together coordinate UDP-N-acetyl-alpha-D-glucosamine. Residues alanine 376, 382–383, serine 401, and alanine 419 contribute to the acetyl-CoA site; that span reads NY.

In the N-terminal section; belongs to the N-acetylglucosamine-1-phosphate uridyltransferase family. This sequence in the C-terminal section; belongs to the transferase hexapeptide repeat family. In terms of assembly, homotrimer. Mg(2+) is required as a cofactor.

It is found in the cytoplasm. It carries out the reaction alpha-D-glucosamine 1-phosphate + acetyl-CoA = N-acetyl-alpha-D-glucosamine 1-phosphate + CoA + H(+). The catalysed reaction is N-acetyl-alpha-D-glucosamine 1-phosphate + UTP + H(+) = UDP-N-acetyl-alpha-D-glucosamine + diphosphate. The protein operates within nucleotide-sugar biosynthesis; UDP-N-acetyl-alpha-D-glucosamine biosynthesis; N-acetyl-alpha-D-glucosamine 1-phosphate from alpha-D-glucosamine 6-phosphate (route II): step 2/2. It functions in the pathway nucleotide-sugar biosynthesis; UDP-N-acetyl-alpha-D-glucosamine biosynthesis; UDP-N-acetyl-alpha-D-glucosamine from N-acetyl-alpha-D-glucosamine 1-phosphate: step 1/1. It participates in bacterial outer membrane biogenesis; LPS lipid A biosynthesis. Its function is as follows. Catalyzes the last two sequential reactions in the de novo biosynthetic pathway for UDP-N-acetylglucosamine (UDP-GlcNAc). The C-terminal domain catalyzes the transfer of acetyl group from acetyl coenzyme A to glucosamine-1-phosphate (GlcN-1-P) to produce N-acetylglucosamine-1-phosphate (GlcNAc-1-P), which is converted into UDP-GlcNAc by the transfer of uridine 5-monophosphate (from uridine 5-triphosphate), a reaction catalyzed by the N-terminal domain. The protein is Bifunctional protein GlmU of Burkholderia mallei (strain NCTC 10247).